The chain runs to 199 residues: Holliday junction resolvase RecU (199 aa).

Mg(2+) contacts are provided by Thr-82, Asp-84, Glu-97, and Gln-116.

This sequence belongs to the RecU family. Mg(2+) is required as a cofactor.

The protein localises to the cytoplasm. It catalyses the reaction Endonucleolytic cleavage at a junction such as a reciprocal single-stranded crossover between two homologous DNA duplexes (Holliday junction).. Functionally, endonuclease that resolves Holliday junction intermediates in genetic recombination. Cleaves mobile four-strand junctions by introducing symmetrical nicks in paired strands. Promotes annealing of linear ssDNA with homologous dsDNA. Required for DNA repair, homologous recombination and chromosome segregation. This chain is Holliday junction resolvase RecU, found in Streptococcus agalactiae serotype Ia (strain ATCC 27591 / A909 / CDC SS700).